We begin with the raw amino-acid sequence, 100 residues long: NADH-quinone oxidoreductase subunit K (100 aa).

3 helical membrane passes run 4-24 (ITYYLLLAAALFCMGMFGVLV), 29-49 (LVVFMSVELMLNAANLTFVAF), and 63-83 (FFVIAVAAAEAAIGLAIVIAV).

The protein belongs to the complex I subunit 4L family. As to quaternary structure, NDH-1 is composed of 14 different subunits. Subunits NuoA, H, J, K, L, M, N constitute the membrane sector of the complex.

It is found in the cell inner membrane. It catalyses the reaction a quinone + NADH + 5 H(+)(in) = a quinol + NAD(+) + 4 H(+)(out). Its function is as follows. NDH-1 shuttles electrons from NADH, via FMN and iron-sulfur (Fe-S) centers, to quinones in the respiratory chain. The immediate electron acceptor for the enzyme in this species is believed to be ubiquinone. Couples the redox reaction to proton translocation (for every two electrons transferred, four hydrogen ions are translocated across the cytoplasmic membrane), and thus conserves the redox energy in a proton gradient. The protein is NADH-quinone oxidoreductase subunit K of Myxococcus xanthus (strain DK1622).